Here is a 160-residue protein sequence, read N- to C-terminus: Twist-related protein 2 (160 aa).

Positions 1 to 63 (MEEGSSSPVS…GSPSAQSFEE (63 aa)) are disordered. Residues 27–37 (KRFGRKRRYSK) are compositionally biased toward basic residues. In terms of domain architecture, bHLH spans 66–117 (SQRILANVRERQRTQSLNEAFAALRKIIPTLPSDKLSKIQTLKLAARYIDFL).

Efficient DNA binding requires dimerization with another bHLH protein. Forms a heterodimer with TCF3/E12. Also interacts with MEF2C. In the embryo, highly expressed in chondrogenic cells. In embryonic skin, expressed in the undifferentiated mesenchymal layer beneath the epidermis which later develops into the dermis. Expressed in early myeloid cells but not in lymphoid cells in the liver. Expression also detected in the secretory ependymal epithelium of the choroid plexus primordium. In the adult, expressed in secreting glandular tissues and tubules.

It is found in the nucleus. The protein resides in the cytoplasm. Binds to the E-box consensus sequence 5'-CANNTG-3' as a heterodimer and inhibits transcriptional activation by MYOD1, MYOG, MEF2A and MEF2C. Also represses expression of pro-inflammatory cytokines such as TNFA and IL1B. Involved in postnatal glycogen storage and energy metabolism. Inhibits the premature or ectopic differentiation of preosteoblast cells during osteogenesis, possibly by changing the internal signal transduction response of osteoblasts to external growth factors. This chain is Twist-related protein 2 (TWIST2), found in Homo sapiens (Human).